Reading from the N-terminus, the 127-residue chain is uncharacterized protein (127 aa).

This is an uncharacterized protein from Haemophilus influenzae (strain ATCC 51907 / DSM 11121 / KW20 / Rd).